Here is a 699-residue protein sequence, read N- to C-terminus: Elongation factor G (699 aa).

Positions 8–288 (EDYRNFGIMA…AVVDYLPSPI (281 aa)) constitute a tr-type G domain. GTP is bound by residues 17-24 (AHIDAGKT), 86-90 (DTPGH), and 140-143 (NKMD).

Belongs to the TRAFAC class translation factor GTPase superfamily. Classic translation factor GTPase family. EF-G/EF-2 subfamily.

Its subcellular location is the cytoplasm. Functionally, catalyzes the GTP-dependent ribosomal translocation step during translation elongation. During this step, the ribosome changes from the pre-translocational (PRE) to the post-translocational (POST) state as the newly formed A-site-bound peptidyl-tRNA and P-site-bound deacylated tRNA move to the P and E sites, respectively. Catalyzes the coordinated movement of the two tRNA molecules, the mRNA and conformational changes in the ribosome. This is Elongation factor G from Rhizobium meliloti (strain 1021) (Ensifer meliloti).